A 295-amino-acid polypeptide reads, in one-letter code: 4-hydroxy-tetrahydrodipicolinate synthase (295 aa).

Thr-47 contributes to the pyruvate binding site. The Proton donor/acceptor role is filled by Tyr-135. Lys-163 functions as the Schiff-base intermediate with substrate in the catalytic mechanism. Ile-206 provides a ligand contact to pyruvate.

The protein belongs to the DapA family. Homodimer.

It localises to the cytoplasm. It carries out the reaction L-aspartate 4-semialdehyde + pyruvate = (2S,4S)-4-hydroxy-2,3,4,5-tetrahydrodipicolinate + H2O + H(+). Its pathway is amino-acid biosynthesis; L-lysine biosynthesis via DAP pathway; (S)-tetrahydrodipicolinate from L-aspartate: step 3/4. Functionally, catalyzes the condensation of (S)-aspartate-beta-semialdehyde [(S)-ASA] and pyruvate to 4-hydroxy-tetrahydrodipicolinate (HTPA). The protein is 4-hydroxy-tetrahydrodipicolinate synthase of Staphylococcus aureus (strain bovine RF122 / ET3-1).